The chain runs to 216 residues: MOB kinase activator 1A (216 aa).

The residue at position 2 (serine 2) is an N-acetylserine. Phosphothreonine is present on residues threonine 12 and threonine 35. Threonine 74 is subject to Phosphothreonine; by STK3/MST2. 4 residues coordinate Zn(2+): cysteine 79, cysteine 84, histidine 161, and histidine 166. Residue threonine 181 is modified to Phosphothreonine.

Belongs to the MOB1/phocein family. Binds STK38 and STK38L. Interacts with LATS1 and LATS2. Forms a tripartite complex with STK38 and STK3/MST2. In terms of processing, phosphorylated by STK3/MST2 and STK4/MST1 and this phosphorylation enhances its binding to LATS1. As to expression, adrenal gland, bone marrow, brain, placenta, prostate, salivary gland, skeletal muscle, testis, thymus, thyroid gland, heart, spinal cord, fetal brain and fetal liver.

Functionally, activator of LATS1/2 in the Hippo signaling pathway which plays a pivotal role in organ size control and tumor suppression by restricting proliferation and promoting apoptosis. The core of this pathway is composed of a kinase cascade wherein STK3/MST2 and STK4/MST1, in complex with its regulatory protein SAV1, phosphorylates and activates LATS1/2 in complex with its regulatory protein MOB1, which in turn phosphorylates and inactivates YAP1 oncoprotein and WWTR1/TAZ. Phosphorylation of YAP1 by LATS1/2 inhibits its translocation into the nucleus to regulate cellular genes important for cell proliferation, cell death, and cell migration. Stimulates the kinase activity of STK38 and STK38L. Acts cooperatively with STK3/MST2 to activate STK38. The polypeptide is MOB kinase activator 1A (Homo sapiens (Human)).